Reading from the N-terminus, the 203-residue chain is Peptide deformylase (203 aa).

Residues Cys130 and His173 each contribute to the Fe cation site. The active site involves Glu174. His177 provides a ligand contact to Fe cation.

This sequence belongs to the polypeptide deformylase family. Requires Fe(2+) as cofactor.

It carries out the reaction N-terminal N-formyl-L-methionyl-[peptide] + H2O = N-terminal L-methionyl-[peptide] + formate. Functionally, removes the formyl group from the N-terminal Met of newly synthesized proteins. Requires at least a dipeptide for an efficient rate of reaction. N-terminal L-methionine is a prerequisite for activity but the enzyme has broad specificity at other positions. This is Peptide deformylase from Streptococcus pneumoniae serotype 19F (strain G54).